Consider the following 179-residue polypeptide: Large ribosomal subunit protein uL6 (179 aa).

It belongs to the universal ribosomal protein uL6 family. In terms of assembly, part of the 50S ribosomal subunit.

Functionally, this protein binds to the 23S rRNA, and is important in its secondary structure. It is located near the subunit interface in the base of the L7/L12 stalk, and near the tRNA binding site of the peptidyltransferase center. This chain is Large ribosomal subunit protein uL6, found in Prochlorococcus marinus (strain MIT 9211).